A 458-amino-acid chain; its full sequence is MKQINDYKGKRVLVLGFGISGLNAAYLLQKLGATVVANDQQVPKDPRVVADLEGAGITAVTGSNPLSLAEEGFDLVVKNPGIPYDTPLVAAFVKKGTPIITELELGYQVFAGHLISVTGSNGKTTTTTLIEQMVAMGNPHRVEYAGNIGVSFSKVAEELGPDDTIVTEASSFQLLGAPTYRPHIAVITNIFANHLDYHKTRQNYIDAKLGITRNQTKDDYLVINWDKEEWQKLAKRTNATVVPFSRLAKSQEGAYQKGGDLYWRQERIMAAKDVVLIGPQNVENALAAIAAAKLSGVANEAIVRVLTTFTGVRHRLQYVLDYEGRRFYNDSKSTDIEATEVALQGFEQPVILLAGGLDRGYTFERLVPYFREHVKALIVFGESKDKMKAAGEQAGVKTIVESTDAVTAVPEAWRLSEPGDVILLSPANASWDQFPNFEVRGDRFIEAVEQLTGKKEEN.

119-125 is an ATP binding site; the sequence is GSNGKTT.

It belongs to the MurCDEF family.

It is found in the cytoplasm. The enzyme catalyses UDP-N-acetyl-alpha-D-muramoyl-L-alanine + D-glutamate + ATP = UDP-N-acetyl-alpha-D-muramoyl-L-alanyl-D-glutamate + ADP + phosphate + H(+). Its pathway is cell wall biogenesis; peptidoglycan biosynthesis. In terms of biological role, cell wall formation. Catalyzes the addition of glutamate to the nucleotide precursor UDP-N-acetylmuramoyl-L-alanine (UMA). In Limosilactobacillus fermentum (strain NBRC 3956 / LMG 18251) (Lactobacillus fermentum), this protein is UDP-N-acetylmuramoylalanine--D-glutamate ligase.